We begin with the raw amino-acid sequence, 949 residues long: ATPase 5, plasma membrane-type (949 aa).

At S2 the chain carries N-acetylserine. Over 2-61 (SELDHIKNESVDLVRIPMEEVFEELKCTKQGLTANEASHRLDVFGPNKLEEKKESKLLKF) the chain is Cytoplasmic. A helical transmembrane segment spans residues 62 to 81 (LGFMWNPLSWVMEVAALMAI). Residues 82 to 93 (ALANGGGRPPDW) lie on the Extracellular side of the membrane. Residues 94–114 (QDFVGIVCLLLINSTISFIEE) form a helical membrane-spanning segment. Over 115–243 (NNAGNAAAAL…GHFQKVLTSI (129 aa)) the chain is Cytoplasmic. Residues 244–264 (GNFCICSIALGIIVELLVMYP) traverse the membrane as a helical segment. Topologically, residues 265-273 (IQRRRYRDG) are extracellular. The helical transmembrane segment at 274 to 291 (IDNLLVLLIGGIPIAMPS) threads the bilayer. Topologically, residues 292–643 (VLSVTMATGS…TSRAIFQRMK (352 aa)) are cytoplasmic. D329 functions as the 4-aspartylphosphate intermediate in the catalytic mechanism. Mg(2+) is bound by residues D588 and D592. The helical transmembrane segment at 644–665 (NYTIYAVSITIRIVFGFMFIAL) threads the bilayer. Over 666 to 670 (IWQFD) the chain is Extracellular. Residues 671-693 (FSPFMVLIIAILNDGTIMTISKD) form a helical membrane-spanning segment. Residues 694-709 (RMKPSPQPDSWKLRDI) are Cytoplasmic-facing. Residues 710 to 730 (FSTGVVLGGYQALMTVVFFWV) traverse the membrane as a helical segment. Topologically, residues 731–751 (MKDSDFFSNYFGVRPLSQRPE) are extracellular. A helical membrane pass occupies residues 752–772 (QMMAALYLQVSIISQALIFVT). At 773–784 (RSRSWSYAECPG) the chain is on the cytoplasmic side. A helical membrane pass occupies residues 785–805 (LLLLGAFVIAQLVATFIAVYA). The Extracellular portion of the chain corresponds to 806-813 (NWSFARIE). The chain crosses the membrane as a helical span at residues 814-834 (GAGWGWAGVIWLYSFLTYIPL). Residues 835 to 949 (DLLKFGIRYV…IDTIQQHYTV (115 aa)) lie on the Cytoplasmic side of the membrane. The residue at position 881 (T881) is a Phosphothreonine. Phosphoserine is present on residues S899 and S931. Residues 947 to 949 (YTV) form an interaction with 14-3-3 proteins region. T948 is subject to Phosphothreonine.

The protein belongs to the cation transport ATPase (P-type) (TC 3.A.3) family. Type IIIA subfamily. Binds to 14-3-3 proteins. The binding is induced by phosphorylation of Thr-948. Binding to 14-3-3 proteins activates the H(+)-ATPase. In terms of tissue distribution, expressed in guard cells and leaves.

The protein resides in the membrane. The enzyme catalyses ATP + H2O + H(+)(in) = ADP + phosphate + 2 H(+)(out). The plasma membrane H(+) ATPase of plants and fungi generates a proton gradient that drives the active transport of nutrients by H(+)-symport. The resulting external acidification and/or internal alkinization may mediate growth responses. In Arabidopsis thaliana (Mouse-ear cress), this protein is ATPase 5, plasma membrane-type (AHA5).